Reading from the N-terminus, the 160-residue chain is F-box protein At1g15015 (160 aa).

Residues 1–44 (MDVTLPHHVVEDILERLPVKTLRKFKCVCSTWRSTIDSQRFKDR) enclose the F-box domain.

This Arabidopsis thaliana (Mouse-ear cress) protein is F-box protein At1g15015.